The chain runs to 1286 residues: Lysine-specific demethylase JMJ705 (1286 aa).

The JmjN domain occupies A25–K66. The interval P82 to P105 is disordered. Residues E201–A367 form the JmjC domain. H244, E246, and H335 together coordinate Fe cation. Residues P641 to S679 show a composition bias toward polar residues. Disordered stretches follow at residues P641–R686, A1013–E1060, and P1077–A1164. Over residues H1119–S1136 the composition is skewed to polar residues. The C2H2-type 1; degenerate zinc-finger motif lies at Y1167–S1189. C2H2-type zinc fingers lie at residues D1190–H1214, L1220–H1244, and Y1250–H1276.

The cofactor is Fe(2+). As to expression, expressed in leaves and flag leaves. Expressed at low levels in roots, shoots, stems and panicles.

Its subcellular location is the nucleus. The catalysed reaction is N(6),N(6),N(6)-trimethyl-L-lysyl(27)-[histone H3] + 2 2-oxoglutarate + 2 O2 = N(6)-methyl-L-lysyl(27)-[histone H3] + 2 formaldehyde + 2 succinate + 2 CO2. Functionally, histone demethylase that demethylates 'Lys-27' (H3K27me) of histone H3 with a specific activity for H3K27me3 and H3K27me2. No activity on H3K4me3, H3K9me3, H3K27me1 and H3K36me3. Involved in biotic stress response. May demethylate H3K27me3-marked defense-related genes and increase their basal and induced expression levels during pathogen infection. The chain is Lysine-specific demethylase JMJ705 (JMJ705) from Oryza sativa subsp. japonica (Rice).